A 624-amino-acid chain; its full sequence is Chaperone protein HtpG (624 aa).

Positions 1 to 336 are a; substrate-binding; it reads MKGQETRGFQ…SSDLSLNVSR (336 aa). Positions 337–552 are b; sequence EILQDSTVTR…ADEMSTQMAK (216 aa). The c stretch occupies residues 553-624; the sequence is LFAAAGQKVP…IRRMNQLLVS (72 aa).

Belongs to the heat shock protein 90 family. In terms of assembly, homodimer.

It localises to the cytoplasm. Functionally, molecular chaperone. Has ATPase activity. In Shigella dysenteriae serotype 1 (strain Sd197), this protein is Chaperone protein HtpG.